Here is an 80-residue protein sequence, read N- to C-terminus: uncharacterized protein (80 aa).

The next 3 helical transmembrane spans lie at 2 to 22 (INLWMFLALCIVCVSGYIGQV), 32 to 52 (FFGMVILAALIYYFTMWLTGG), and 55 to 75 (LVTGIFMFLAPACGLMIRFMV).

It localises to the cell membrane. This is an uncharacterized protein from Escherichia coli (strain K12).